Reading from the N-terminus, the 493-residue chain is Serine/threonine-protein kinase chk-1 (493 aa).

One can recognise a Protein kinase domain in the interval Tyr-26–Phe-286. Residues Leu-32–Val-40 and Lys-56 each bind ATP. Asp-150 functions as the Proton acceptor in the catalytic mechanism. A disordered region spans residues Asp-308–Ser-348. Positions Pro-312 to Ala-324 are enriched in polar residues. Over residues Leu-333–Arg-344 the composition is skewed to basic and acidic residues.

The protein belongs to the protein kinase superfamily. CAMK Ser/Thr protein kinase family. NIM1 subfamily.

It is found in the cytoplasm. The protein localises to the nucleus. The catalysed reaction is L-seryl-[protein] + ATP = O-phospho-L-seryl-[protein] + ADP + H(+). It carries out the reaction L-threonyl-[protein] + ATP = O-phospho-L-threonyl-[protein] + ADP + H(+). Serine/threonine-protein kinase which is required for checkpoint-mediated cell cycle arrest and activation of DNA repair in response to the presence of DNA damage or unreplicated DNA. May also negatively regulate cell cycle progression during unperturbed cell cycles. Required for checkpoint mediated cell cycle arrest in response to DNA damage in germline cells. Essential for embryogenesis. This chain is Serine/threonine-protein kinase chk-1 (chk-1), found in Caenorhabditis briggsae.